The primary structure comprises 415 residues: Gamma-glutamyl phosphate reductase (415 aa).

The protein belongs to the gamma-glutamyl phosphate reductase family.

The protein resides in the cytoplasm. The catalysed reaction is L-glutamate 5-semialdehyde + phosphate + NADP(+) = L-glutamyl 5-phosphate + NADPH + H(+). It participates in amino-acid biosynthesis; L-proline biosynthesis; L-glutamate 5-semialdehyde from L-glutamate: step 2/2. Catalyzes the NADPH-dependent reduction of L-glutamate 5-phosphate into L-glutamate 5-semialdehyde and phosphate. The product spontaneously undergoes cyclization to form 1-pyrroline-5-carboxylate. The polypeptide is Gamma-glutamyl phosphate reductase (Leuconostoc citreum (strain KM20)).